A 69-amino-acid polypeptide reads, in one-letter code: Ribosome modulation factor (69 aa).

It belongs to the ribosome modulation factor family.

The protein localises to the cytoplasm. During stationary phase, converts 70S ribosomes to an inactive dimeric form (100S ribosomes). The polypeptide is Ribosome modulation factor (Marinomonas mediterranea (strain ATCC 700492 / JCM 21426 / NBRC 103028 / MMB-1)).